We begin with the raw amino-acid sequence, 519 residues long: GATA zinc finger domain-containing protein 8 (519 aa).

4 disordered regions span residues 25–182, 198–249, 273–359, and 431–453; these read YSTG…SSSG, SNIN…SNNT, SNNM…NNKQ, and DERQ…KRRE. Residues 37-156 are compositionally biased toward low complexity; the sequence is TNNSQNKTNN…SSSITSPSSN (120 aa). Positions 172–182 are enriched in polar residues; it reads SPNNKQVSSSG. A compositionally biased stretch (low complexity) spans 273 to 357; the sequence is SNNMNINNQH…SNINNNNNNN (85 aa). Residues 429 to 461 are a coiled coil; sequence KTDERQQKKRMESDKNAEKREKRREASRLLNNV. The GATA-type zinc finger occupies 462–487; it reads CRNCKTTETPEWRKGPDGTKSLCNAC.

This is GATA zinc finger domain-containing protein 8 (gtaH) from Dictyostelium discoideum (Social amoeba).